The following is a 382-amino-acid chain: Queuine tRNA-ribosyltransferase (382 aa).

Aspartate 93 acts as the Proton acceptor in catalysis. Substrate-binding positions include 93 to 97, aspartate 147, glutamine 191, and glycine 218; that span reads DSGGF. The interval 249–255 is RNA binding; the sequence is GVGKPED. Catalysis depends on aspartate 268, which acts as the Nucleophile. An RNA binding; important for wobble base 34 recognition region spans residues 273–277; sequence TRNAR. Residues cysteine 306, cysteine 308, cysteine 311, and histidine 337 each coordinate Zn(2+).

The protein belongs to the queuine tRNA-ribosyltransferase family. Homodimer. Within each dimer, one monomer is responsible for RNA recognition and catalysis, while the other monomer binds to the replacement base PreQ1. Requires Zn(2+) as cofactor.

It carries out the reaction 7-aminomethyl-7-carbaguanine + guanosine(34) in tRNA = 7-aminomethyl-7-carbaguanosine(34) in tRNA + guanine. Its pathway is tRNA modification; tRNA-queuosine biosynthesis. Its function is as follows. Catalyzes the base-exchange of a guanine (G) residue with the queuine precursor 7-aminomethyl-7-deazaguanine (PreQ1) at position 34 (anticodon wobble position) in tRNAs with GU(N) anticodons (tRNA-Asp, -Asn, -His and -Tyr). Catalysis occurs through a double-displacement mechanism. The nucleophile active site attacks the C1' of nucleotide 34 to detach the guanine base from the RNA, forming a covalent enzyme-RNA intermediate. The proton acceptor active site deprotonates the incoming PreQ1, allowing a nucleophilic attack on the C1' of the ribose to form the product. After dissociation, two additional enzymatic reactions on the tRNA convert PreQ1 to queuine (Q), resulting in the hypermodified nucleoside queuosine (7-(((4,5-cis-dihydroxy-2-cyclopenten-1-yl)amino)methyl)-7-deazaguanosine). This Actinobacillus pleuropneumoniae serotype 5b (strain L20) protein is Queuine tRNA-ribosyltransferase.